The chain runs to 490 residues: Pup--protein ligase (490 aa).

Residue Glu-9 participates in Mg(2+) binding. An ATP-binding site is contributed by Arg-53. Tyr-55 provides a ligand contact to Mg(2+). Asp-57 (proton acceptor) is an active-site residue. Glu-63 contacts Mg(2+). Ser-66 is an ATP binding site. The disordered stretch occupies residues 160–181 (KTHPNGGPVPGSTDPASSTGVP). ATP is bound at residue Trp-441.

It belongs to the Pup ligase/Pup deamidase family. Pup-conjugating enzyme subfamily.

It catalyses the reaction ATP + [prokaryotic ubiquitin-like protein]-L-glutamate + [protein]-L-lysine = ADP + phosphate + N(6)-([prokaryotic ubiquitin-like protein]-gamma-L-glutamyl)-[protein]-L-lysine.. The protein operates within protein degradation; proteasomal Pup-dependent pathway. It participates in protein modification; protein pupylation. Its function is as follows. Catalyzes the covalent attachment of the prokaryotic ubiquitin-like protein modifier Pup to the proteasomal substrate proteins, thereby targeting them for proteasomal degradation. This tagging system is termed pupylation. The ligation reaction involves the side-chain carboxylate of the C-terminal glutamate of Pup and the side-chain amino group of a substrate lysine. The sequence is that of Pup--protein ligase from Rothia mucilaginosa (strain DY-18) (Stomatococcus mucilaginosus).